Reading from the N-terminus, the 142-residue chain is Cystatin-8 (142 aa).

The signal sequence occupies residues 1–19 (MAKPLWLSLILFIIPVALA). The N-linked (GlcNAc...) asparagine glycan is linked to N39. The short motif at 77–81 (QITDR) is the Secondary area of contact element. 2 disulfides stabilise this stretch: C95-C105 and C119-C139. N100 is a glycosylation site (N-linked (GlcNAc...) asparagine).

Belongs to the cystatin family. As to expression, proximal caput region of the epididymis. Lower expression in the testis. Within the testis it is localized to the elongating spermatids, whereas within the epididymis it is exclusively synthesized by the proximal caput epithelium.

The protein localises to the secreted. In terms of biological role, performs a specialized role during sperm development and maturation. The chain is Cystatin-8 (Cst8) from Mus musculus (Mouse).